Reading from the N-terminus, the 316-residue chain is tRNA dimethylallyltransferase (316 aa).

ATP is bound at residue 17-24 (GPTASGKT). 19-24 (TASGKT) lines the substrate pocket. Interaction with substrate tRNA stretches follow at residues 42–45 (DSAL), 166–170 (QRLSR), 247–252 (RCVGYR), and 280–287 (KRQITWLR).

The protein belongs to the IPP transferase family. As to quaternary structure, monomer. Mg(2+) is required as a cofactor.

The enzyme catalyses adenosine(37) in tRNA + dimethylallyl diphosphate = N(6)-dimethylallyladenosine(37) in tRNA + diphosphate. In terms of biological role, catalyzes the transfer of a dimethylallyl group onto the adenine at position 37 in tRNAs that read codons beginning with uridine, leading to the formation of N6-(dimethylallyl)adenosine (i(6)A). In Escherichia coli O157:H7, this protein is tRNA dimethylallyltransferase.